Reading from the N-terminus, the 1256-residue chain is Bifunctional autolysin (1256 aa).

The first 29 residues, 1–29 (MAKKFNYKLPSMVALTLVGSAVTAHQVQA), serve as a signal peptide directing secretion. A compositionally biased stretch (polar residues) spans 103 to 138 (GDTRANQSATTNNTQPVAKSTSTTAPKTNTNVTNAG). Disordered regions lie at residues 103–151 (GDTR…NSEN), 173–219 (AAAP…KYKP), and 419–440 (TQST…PSTG). Composition is skewed to low complexity over residues 173-196 (AAAP…KVTT) and 421-439 (STTT…KPST). The interval 199–775 (ASAQPRSVAA…AVAQPKTAVK (577 aa)) is N-acetylmuramoyl-L-alanine amidase. 7 GW domains span residues 443–517 (TVAA…YNTA), 519–593 (SPVN…DTAK), 612–686 (TVSS…YNNA), 688–762 (SPVN…VPAA), 784–859 (TTQT…VQNL), 861–936 (KEVK…APTA), and 943–1017 (AAKD…KELI). The endo-beta-N-acetylglucosaminidase stretch occupies residues 776-1256 (AYTVTKPQTT…GKYFDIPQYK (481 aa)).

This sequence in the N-terminal section; belongs to the N-acetylmuramoyl-L-alanine amidase 2 family. The protein in the C-terminal section; belongs to the glycosyl hydrolase 73 family. As to quaternary structure, oligomer; forms a ring structure at the cell surface which is important for efficient partitioning of daughter cells after cell division. Undergoes proteolytic processing to generate the two extracellular lytic enzymes, probably at the septal region on the cell surface.

The protein resides in the secreted. It catalyses the reaction Hydrolyzes the link between N-acetylmuramoyl residues and L-amino acid residues in certain cell-wall glycopeptides.. The catalysed reaction is an N(4)-(oligosaccharide-(1-&gt;3)-[oligosaccharide-(1-&gt;6)]-beta-D-Man-(1-&gt;4)-beta-D-GlcNAc-(1-&gt;4)-alpha-D-GlcNAc)-L-asparaginyl-[protein] + H2O = an oligosaccharide-(1-&gt;3)-[oligosaccharide-(1-&gt;6)]-beta-D-Man-(1-&gt;4)-D-GlcNAc + N(4)-(N-acetyl-beta-D-glucosaminyl)-L-asparaginyl-[protein]. In terms of biological role, endohydrolysis of the di-N-acetylchitobiosyl unit in high-mannose glycopeptides and glycoproteins containing the -[(Man)5(GlcNAc)2]-Asn structure. One N-acetyl-D-glucosamine residue remains attached to the protein; the rest of the oligosaccharide is released intact. Cleaves the peptidoglycan connecting the daughter cells at the end of the cell division cycle, resulting in the separation of the two newly divided cells. Acts as an autolysin in penicillin-induced lysis. In Staphylococcus aureus (strain MW2), this protein is Bifunctional autolysin (atl).